A 166-amino-acid chain; its full sequence is NAD(P)H-quinone oxidoreductase subunit I, chloroplastic (166 aa).

2 4Fe-4S ferredoxin-type domains span residues 55–84 (GRIH…VDWK) and 95–124 (LNYS…MTEE). [4Fe-4S] cluster-binding residues include Cys-64, Cys-67, Cys-70, Cys-74, Cys-104, Cys-107, Cys-110, and Cys-114.

The protein belongs to the complex I 23 kDa subunit family. As to quaternary structure, NDH is composed of at least 16 different subunits, 5 of which are encoded in the nucleus. The cofactor is [4Fe-4S] cluster.

The protein localises to the plastid. Its subcellular location is the chloroplast thylakoid membrane. It carries out the reaction a plastoquinone + NADH + (n+1) H(+)(in) = a plastoquinol + NAD(+) + n H(+)(out). The enzyme catalyses a plastoquinone + NADPH + (n+1) H(+)(in) = a plastoquinol + NADP(+) + n H(+)(out). In terms of biological role, NDH shuttles electrons from NAD(P)H:plastoquinone, via FMN and iron-sulfur (Fe-S) centers, to quinones in the photosynthetic chain and possibly in a chloroplast respiratory chain. The immediate electron acceptor for the enzyme in this species is believed to be plastoquinone. Couples the redox reaction to proton translocation, and thus conserves the redox energy in a proton gradient. The polypeptide is NAD(P)H-quinone oxidoreductase subunit I, chloroplastic (Oxypappus scaber).